The sequence spans 364 residues: V-type proton ATPase subunit d (364 aa).

It belongs to the V-ATPase V0D/AC39 subunit family. As to quaternary structure, V-ATPase is a heteromultimeric enzyme composed of a peripheral catalytic V1 complex (components A to H) attached to an integral membrane V0 proton pore complex (components: a, c, c', c'', d, e, f and VOA1).

It localises to the vacuole membrane. Functionally, subunit of the V0 complex of vacuolar(H+)-ATPase (V-ATPase), a multisubunit enzyme composed of a peripheral complex (V1) that hydrolyzes ATP and a membrane integral complex (V0) that translocates protons. V-ATPase is responsible for acidifying and maintaining the pH of intracellular compartments. This subunit is a non-integral membrane component of the membrane pore domain and is required for proper assembly of the V0 sector. Might be involved in the regulated assembly of V1 subunits onto the membrane sector or alternatively may prevent the passage of protons through V0 pores. The chain is V-type proton ATPase subunit d from Neurospora crassa (strain ATCC 24698 / 74-OR23-1A / CBS 708.71 / DSM 1257 / FGSC 987).